Here is a 237-residue protein sequence, read N- to C-terminus: MRGGAVTIHVKDRQIVAPGEFVGEQGRFRVEGQVFRVGRKYYSKVLGVVTVDEENRVVKVIPLKGKYFPVEGHIVVGKVVDIGFTSWEVDINSPYVAVLPVSEVTSRPVTISRNELSRILDVGDLILAKIVSFDLSKDPVLTIKESRLGKIPRGTLVEIPPQKVPRVIGRRGSMVSMIEDLLGVKLIVGQNGRIVVVGDDPQRVEIAVLAVRKIEAEAHTTGLTDRIKQFIEERLRS.

Residues 72 to 144 form the S1 motif domain; sequence GHIVVGKVVD…LSKDPVLTIK (73 aa). In terms of domain architecture, KH spans 152-211; the sequence is PRGTLVEIPPQKVPRVIGRRGSMVSMIEDLLGVKLIVGQNGRIVVVGDDPQRVEIAVLAV.

This sequence belongs to the RRP4 family. Component of the archaeal exosome complex. Forms a trimer of Rrp4 and/or Csl4 subunits. The trimer associates with a hexameric ring-like arrangement composed of 3 Rrp41-Rrp42 heterodimers.

It is found in the cytoplasm. Its function is as follows. Non-catalytic component of the exosome, which is a complex involved in RNA degradation. Increases the RNA binding and the efficiency of RNA degradation. Confers strong poly(A) specificity to the exosome. In Thermofilum pendens (strain DSM 2475 / Hrk 5), this protein is Exosome complex component Rrp4.